A 230-amino-acid polypeptide reads, in one-letter code: MEITWLGHGTFQFRLPSGQVLVMDPWIDGNPAYPKGCKIDRVDTICISHGHFDHIHDAVPLAKQFDPEVVAIFETAHWLESKGVAKTRPMNKGGSQKVGEVMVTMTHAVHSCGIVDEGKIIYGGEAAGYVLHLPDKRVIYFSGDTNVFSDMALIEQLYHPELAFLPIGDLYTMSPHEAALACRLLRARKVIPMHFGTFPPLTGRPDDLRERIRGLETEVWALEPGKPVQW.

Belongs to the UPF0173 family.

This is UPF0173 metal-dependent hydrolase Acid_3917 from Solibacter usitatus (strain Ellin6076).